Reading from the N-terminus, the 178-residue chain is MIDDNIENNEQTINDIAEEIVETANPEVTALKAEIEELKDKLIRTTAEIDNTRKRLEKARDEAKDYAIATFAKELLNVSDNLSRALAHKPANSDVEVTNIIAGVQMTKDELDKVFHKHHIEEIKPEIGSMFDYNLHNAIAQIEHPDHAPNSIITLMQSGYKIRDRLLRPATVQVVKKP.

This sequence belongs to the GrpE family. As to quaternary structure, homodimer.

It localises to the cytoplasm. Participates actively in the response to hyperosmotic and heat shock by preventing the aggregation of stress-denatured proteins, in association with DnaK and GrpE. It is the nucleotide exchange factor for DnaK and may function as a thermosensor. Unfolded proteins bind initially to DnaJ; upon interaction with the DnaJ-bound protein, DnaK hydrolyzes its bound ATP, resulting in the formation of a stable complex. GrpE releases ADP from DnaK; ATP binding to DnaK triggers the release of the substrate protein, thus completing the reaction cycle. Several rounds of ATP-dependent interactions between DnaJ, DnaK and GrpE are required for fully efficient folding. The chain is Protein GrpE from Rickettsia africae (strain ESF-5).